The following is a 305-amino-acid chain: Divergent heme oxygenase-like protein (305 aa).

A signal peptide spans 1 to 18; the sequence is MIRKIIILMFTFFSNIHN. A sufficient for apicoplast targeting region spans residues 1–83; sequence MIRKIIILMF…GVDKNNINYN (83 aa). 3 N-linked (GlcNAc...) asparagine glycosylation sites follow: Asn132, Asn159, and Asn288.

Post-translationally, proteolytically cleaved; targeted by its N-terminal leader sequence for import into the apicoplast where it undergoes proteolytic processing, resulting in an N-terminus starting at or near Gly-33 in the mature protein.

The protein resides in the plastid. The protein localises to the apicoplast. Functionally, essential for blood-stage parasite viability. Required for apicoplast biogenesis. Associates with the apicoplast genome and mediates apicoplast gene expression. Can bind heme. Can bind protoporphyrin IX. This Plasmodium falciparum (isolate 3D7) protein is Divergent heme oxygenase-like protein.